Reading from the N-terminus, the 264-residue chain is 5'-nucleotidase SurE (264 aa).

The a divalent metal cation site is built by Asp-8, Asp-9, Ser-39, and Asn-95.

This sequence belongs to the SurE nucleotidase family. It depends on a divalent metal cation as a cofactor.

It is found in the cytoplasm. The enzyme catalyses a ribonucleoside 5'-phosphate + H2O = a ribonucleoside + phosphate. In terms of biological role, nucleotidase that shows phosphatase activity on nucleoside 5'-monophosphates. The chain is 5'-nucleotidase SurE from Syntrophomonas wolfei subsp. wolfei (strain DSM 2245B / Goettingen).